A 405-amino-acid polypeptide reads, in one-letter code: Phosphopentomutase (405 aa).

Positions 10, 303, 308, 344, 345, and 356 each coordinate Mn(2+).

Belongs to the phosphopentomutase family. Mn(2+) is required as a cofactor.

The protein localises to the cytoplasm. The enzyme catalyses 2-deoxy-alpha-D-ribose 1-phosphate = 2-deoxy-D-ribose 5-phosphate. The catalysed reaction is alpha-D-ribose 1-phosphate = D-ribose 5-phosphate. The protein operates within carbohydrate degradation; 2-deoxy-D-ribose 1-phosphate degradation; D-glyceraldehyde 3-phosphate and acetaldehyde from 2-deoxy-alpha-D-ribose 1-phosphate: step 1/2. Functionally, isomerase that catalyzes the conversion of deoxy-ribose 1-phosphate (dRib-1-P) and ribose 1-phosphate (Rib-1-P) to deoxy-ribose 5-phosphate (dRib-5-P) and ribose 5-phosphate (Rib-5-P), respectively. In Shewanella frigidimarina (strain NCIMB 400), this protein is Phosphopentomutase.